The primary structure comprises 429 residues: GTPase Obg (429 aa).

The 158-residue stretch at 1–158 (MFVDQVKIYV…RNVQLELKVL (158 aa)) folds into the Obg domain. Residues 124–145 (RGNKRFATPANPAPELSENGEP) are disordered. One can recognise an OBG-type G domain in the interval 159 to 329 (ADVGLVGFPS…LLLAIADKLE (171 aa)). Residues 165-172 (GFPSVGKS), 190-194 (FTTIV), 212-215 (DLPG), 282-285 (NKMD), and 310-312 (SAV) contribute to the GTP site. Ser-172 and Thr-192 together coordinate Mg(2+). The OCT domain maps to 351 to 429 (KYIAEEPDFE…LLDYEFEFMD (79 aa)).

Belongs to the TRAFAC class OBG-HflX-like GTPase superfamily. OBG GTPase family. Monomer. Mg(2+) serves as cofactor.

The protein localises to the cytoplasm. Its function is as follows. An essential GTPase which binds GTP, GDP and possibly (p)ppGpp with moderate affinity, with high nucleotide exchange rates and a fairly low GTP hydrolysis rate. Plays a role in control of the cell cycle, stress response, ribosome biogenesis and in those bacteria that undergo differentiation, in morphogenesis control. This chain is GTPase Obg, found in Listeria welshimeri serovar 6b (strain ATCC 35897 / DSM 20650 / CCUG 15529 / CIP 8149 / NCTC 11857 / SLCC 5334 / V8).